Here is a 304-residue protein sequence, read N- to C-terminus: Glycine--tRNA ligase alpha subunit (304 aa).

Belongs to the class-II aminoacyl-tRNA synthetase family. As to quaternary structure, tetramer of two alpha and two beta subunits.

It localises to the cytoplasm. The catalysed reaction is tRNA(Gly) + glycine + ATP = glycyl-tRNA(Gly) + AMP + diphosphate. This is Glycine--tRNA ligase alpha subunit from Photorhabdus laumondii subsp. laumondii (strain DSM 15139 / CIP 105565 / TT01) (Photorhabdus luminescens subsp. laumondii).